The chain runs to 139 residues: Lysozyme (139 aa).

A signal peptide spans 1–19; it reads MTKYVILLAVLAFALHCDA. Residues 20-139 enclose the C-type lysozyme domain; the sequence is KRFTRCGLVQ…QHGLPDISDC (120 aa). 4 cysteine pairs are disulfide-bonded: C25–C139, C46–C129, C81–C95, and C91–C109. Residues E51 and D69 contribute to the active site.

The protein belongs to the glycosyl hydrolase 22 family.

The catalysed reaction is Hydrolysis of (1-&gt;4)-beta-linkages between N-acetylmuramic acid and N-acetyl-D-glucosamine residues in a peptidoglycan and between N-acetyl-D-glucosamine residues in chitodextrins.. Functionally, lysozymes have primarily a bacteriolytic function; those in tissues and body fluids are associated with the monocyte-macrophage system and enhance the activity of immunoagents. The polypeptide is Lysozyme (Hyalophora cecropia (Cecropia moth)).